A 430-amino-acid chain; its full sequence is Tryptophan synthase beta chain (430 aa).

Residue lysine 95 is modified to N6-(pyridoxal phosphate)lysine.

Belongs to the TrpB family. As to quaternary structure, tetramer of two alpha and two beta chains. Requires pyridoxal 5'-phosphate as cofactor.

The catalysed reaction is (1S,2R)-1-C-(indol-3-yl)glycerol 3-phosphate + L-serine = D-glyceraldehyde 3-phosphate + L-tryptophan + H2O. Its pathway is amino-acid biosynthesis; L-tryptophan biosynthesis; L-tryptophan from chorismate: step 5/5. Its function is as follows. The beta subunit is responsible for the synthesis of L-tryptophan from indole and L-serine. The protein is Tryptophan synthase beta chain of Halobacterium salinarum (strain ATCC 29341 / DSM 671 / R1).